The primary structure comprises 426 residues: Deoxyguanosinetriphosphate triphosphohydrolase-like protein (426 aa).

Positions 1 to 23 (MYPYSESDAQRLHQEAPKASQLA) are disordered. In terms of domain architecture, HD spans 67 to 217 (RLTHSLEVAQ…MDFSDDIAYS (151 aa)).

Belongs to the dGTPase family. Type 2 subfamily.

The sequence is that of Deoxyguanosinetriphosphate triphosphohydrolase-like protein from Corynebacterium efficiens (strain DSM 44549 / YS-314 / AJ 12310 / JCM 11189 / NBRC 100395).